The primary structure comprises 608 residues: Lysophospholipase 2 (608 aa).

The N-terminal stretch at 1-17 (MLVWQSILLFLVGCVLS) is a signal peptide. Residues 30-564 (QCPEGKLTRS…ENYCWDGTIY (535 aa)) enclose the PLA2c domain. N-linked (GlcNAc...) asparagine glycans are attached at residues asparagine 259, asparagine 365, asparagine 450, asparagine 464, asparagine 491, and asparagine 572.

Belongs to the lysophospholipase family.

The protein resides in the secreted. The enzyme catalyses a 1-acyl-sn-glycero-3-phosphocholine + H2O = sn-glycerol 3-phosphocholine + a fatty acid + H(+). In terms of biological role, catalyzes the release of fatty acids from lysophospholipids. Phospholipase B may well contribute to pathogenicity by abetting the fungus in damaging and traversing host cell membranes, processes which likely increase the rapidity of disseminated infection. The polypeptide is Lysophospholipase 2 (PLB2) (Candida albicans (Yeast)).